Here is a 404-residue protein sequence, read N- to C-terminus: Argininosuccinate synthase (404 aa).

Residues 11–19 (AYSGGLDTS) and Ala-40 each bind ATP. Tyr-92 and Ser-97 together coordinate L-citrulline. Gly-122 is a binding site for ATP. Residues Thr-124, Asn-128, and Asp-129 each coordinate L-aspartate. Asn-128 provides a ligand contact to L-citrulline. The L-citrulline site is built by Arg-132, Ser-181, Ser-190, Glu-266, and Tyr-278.

The protein belongs to the argininosuccinate synthase family. Type 1 subfamily. As to quaternary structure, homotetramer.

It localises to the cytoplasm. It catalyses the reaction L-citrulline + L-aspartate + ATP = 2-(N(omega)-L-arginino)succinate + AMP + diphosphate + H(+). It participates in amino-acid biosynthesis; L-arginine biosynthesis; L-arginine from L-ornithine and carbamoyl phosphate: step 2/3. The sequence is that of Argininosuccinate synthase from Moritella abyssi.